Consider the following 277-residue polypeptide: Shikimate dehydrogenase (NADP(+)) (277 aa).

Shikimate contacts are provided by residues 18-20 (SKS) and threonine 65. The active-site Proton acceptor is lysine 69. Residue glutamate 81 coordinates NADP(+). The shikimate site is built by asparagine 90 and aspartate 106. Residues 130 to 134 (GAGGA), 154 to 159 (NRTFSK), and methionine 217 each bind NADP(+). Residue tyrosine 219 coordinates shikimate. NADP(+) is bound at residue glycine 241.

The protein belongs to the shikimate dehydrogenase family. Homodimer.

The enzyme catalyses shikimate + NADP(+) = 3-dehydroshikimate + NADPH + H(+). Its pathway is metabolic intermediate biosynthesis; chorismate biosynthesis; chorismate from D-erythrose 4-phosphate and phosphoenolpyruvate: step 4/7. Functionally, involved in the biosynthesis of the chorismate, which leads to the biosynthesis of aromatic amino acids. Catalyzes the reversible NADPH linked reduction of 3-dehydroshikimate (DHSA) to yield shikimate (SA). The chain is Shikimate dehydrogenase (NADP(+)) from Vibrio parahaemolyticus serotype O3:K6 (strain RIMD 2210633).